Here is a 433-residue protein sequence, read N- to C-terminus: Ectonucleoside triphosphate diphosphohydrolase 5 (433 aa).

Residues 1-24 form the signal peptide; sequence MATTWGAAFFMLVASCVCSTVFHR. Residue Glu-172 is the Proton acceptor of the active site. Residue Asn-232 is glycosylated (N-linked (GlcNAc...) asparagine). 2 disulfide bridges follow: Cys-272-Cys-308 and Cys-368-Cys-382.

It belongs to the GDA1/CD39 NTPase family. Monomer; active form. Homodimer; disulfide-linked. Homodimers are enzymatically inactive. Ca(2+) is required as a cofactor. Mg(2+) serves as cofactor. In terms of processing, N-glycosylated; high-mannose type.

It is found in the endoplasmic reticulum. The protein resides in the secreted. It carries out the reaction a ribonucleoside 5'-diphosphate + H2O = a ribonucleoside 5'-phosphate + phosphate + H(+). The catalysed reaction is GDP + H2O = GMP + phosphate + H(+). It catalyses the reaction UDP + H2O = UMP + phosphate + H(+). The enzyme catalyses IDP + H2O = IMP + phosphate + H(+). It carries out the reaction CDP + H2O = CMP + phosphate + H(+). The catalysed reaction is ADP + H2O = AMP + phosphate + H(+). The protein operates within protein modification; protein glycosylation. In terms of biological role, hydrolyzes nucleoside diphosphates with a preference for GDP, IDP and UDP compared to ADP and CDP. In the lumen of the endoplasmic reticulum, hydrolyzes UDP that acts as an end-product feedback inhibitor of the UDP-Glc:glycoprotein glucosyltransferases. UMP can be transported back by an UDP-sugar antiporter to the cytosol where it is consumed to regenerate UDP-glucose. Therefore, it positively regulates protein reglucosylation by clearing UDP from the ER lumen and by promoting the regeneration of UDP-glucose. Protein reglucosylation is essential to proper glycoprotein folding and quality control in the ER. This is Ectonucleoside triphosphate diphosphohydrolase 5 (ENTPD5) from Ailuropoda melanoleuca (Giant panda).